The chain runs to 202 residues: Ribosomal RNA small subunit methyltransferase G (202 aa).

Residues G75, F80, 125–126 (VQ), and R139 contribute to the S-adenosyl-L-methionine site.

The protein belongs to the methyltransferase superfamily. RNA methyltransferase RsmG family.

Its subcellular location is the cytoplasm. Functionally, specifically methylates the N7 position of a guanine in 16S rRNA. This Mesomycoplasma hyopneumoniae (strain 7448) (Mycoplasma hyopneumoniae) protein is Ribosomal RNA small subunit methyltransferase G.